We begin with the raw amino-acid sequence, 278 residues long: MATPTSVRIAGFRSLQALCAQRTVTRNFSLLNRPAPNYPGHIPLTPVERGVLAIGSAVGSLLNPRRGDLIATLGETTATPFFIYRLRDAMLSNPTGRRILRDRPRITSQTLSLPYLRSLPPNTVGYTYAAWLDREGVSPDTRSSVQYIDDEECAYVMQRYRECHDFYHAVTGLPIMVEGEIALKAFEFLNTLIPMTGLSVFAAVRLKPEERQRFWSIHLPWAVRSGLASKELINVYWEEQLERDVNELREELNIEKPPDLRDIRKKLREQKRAARRQQ.

A mitochondrion-targeting transit peptide spans 1–28 (MATPTSVRIAGFRSLQALCAQRTVTRNF). Positions 164, 165, 168, and 180 each coordinate Zn(2+).

Belongs to the COQ4 family. Component of a multi-subunit COQ enzyme complex, composed of at least COQ3, COQ4, COQ5, COQ6, COQ7 and COQ9. Zn(2+) serves as cofactor.

The protein resides in the mitochondrion inner membrane. The enzyme catalyses a 4-hydroxy-3-methoxy-5-(all-trans-polyprenyl)benzoate + H(+) = a 2-methoxy-6-(all-trans-polyprenyl)phenol + CO2. Its pathway is cofactor biosynthesis; ubiquinone biosynthesis. Functionally, lyase that catalyzes the C1-decarboxylation of 4-hydroxy-3-methoxy-5-(all-trans-polyprenyl)benzoic acid into 2-methoxy-6-(all-trans-polyprenyl)phenol during ubiquinone biosynthesis. This Uncinocarpus reesii (strain UAMH 1704) protein is Ubiquinone biosynthesis protein COQ4, mitochondrial.